A 901-amino-acid chain; its full sequence is HTH-type transcriptional regulator MalT (901 aa).

ATP is bound at residue 39–46 (SPAGYGKT). In terms of domain architecture, HTH luxR-type spans 829 to 894 (ELIRTSPLTQ…AAVQHAQKLL (66 aa)). A DNA-binding region (H-T-H motif) is located at residues 853–872 (NEQIAGELEVAATTIKTHIR).

The protein belongs to the MalT family. In terms of assembly, monomer in solution. Oligomerizes to an active state in the presence of the positive effectors ATP and maltotriose.

Activated by ATP and maltotriose, which are both required for DNA binding. Its function is as follows. Positively regulates the transcription of the maltose regulon whose gene products are responsible for uptake and catabolism of malto-oligosaccharides. Specifically binds to the promoter region of its target genes, recognizing a short DNA motif called the MalT box. In Escherichia coli O45:K1 (strain S88 / ExPEC), this protein is HTH-type transcriptional regulator MalT.